We begin with the raw amino-acid sequence, 764 residues long: Complement factor B (764 aa).

Residues 1-25 (MGSNLSPQLCLMPFILGLLSGGVTT) form the signal peptide. Sushi domains follow at residues 35 to 100 (ESCS…ECRA), 101 to 160 (IHCP…ICDN), and 163 to 220 (GYCS…SCQD). 6 cysteine pairs are disulfide-bonded: Cys37–Cys76, Cys62–Cys98, Cys103–Cys145, Cys131–Cys158, Cys165–Cys205, and Cys191–Cys218. Residues Asn122 and Asn142 are each glycosylated (N-linked (GlcNAc...) asparagine). The VWFA domain occupies 270 to 469 (NIYLVLDGSD…NLEDVFYQMI (200 aa)). Positions 278 and 280 each coordinate Mg(2+). Asn285 is a glycosylation site (N-linked (GlcNAc...) asparagine). Residue Thr353 coordinates Mg(2+). Asn378 is a glycosylation site (N-linked (GlcNAc...) asparagine). The Peptidase S1 domain maps to 477 to 757 (LCGMVWEHRK…VLPWLKEKLQ (281 aa)). Cystine bridges form between Cys478–Cys596, Cys511–Cys527, Cys599–Cys615, Cys656–Cys682, and Cys695–Cys725. Catalysis depends on charge relay system residues His526 and Asp576. Catalysis depends on Ser699, which acts as the Charge relay system.

This sequence belongs to the peptidase S1 family. In terms of assembly, monomer. Interacts with complement C3b; this interaction is dependent on the presence of Mg(2+). Catalytic component of the C3 convertase of the alternative complement pathway, also named C3bBb, composed of complement factor B Bb and complement C3b. Catalytic component of the C5 convertase of the alternative complement pathway, also named C3bBb3b, composed of complement factor B Bb and additional molecules of complement C3b. Interacts to CFP; this interaction contributes to the stabilization of the active C3-convertase enzyme complex. The cofactor is Mg(2+). Mn(2+) is required as a cofactor. In terms of processing, cleaved by CFD following activation of the alternative complement system, generating Ba and Bb chains. Cleavage and activation takes place when CFB is already associated with complement C3b.

It is found in the secreted. The protein localises to the cell surface. It carries out the reaction Cleavage of Arg-|-Ser bond in complement component C3 alpha-chain to yield C3a and C3b, and Arg-|-Xaa bond in complement component C5 alpha-chain to yield C5a and C5b.. Functionally, precursor of the catalytic component of the C3 and C5 convertase complexes of the alternative pathway of the complement system, a cascade of proteins that leads to phagocytosis and breakdown of pathogens and signaling that strengthens the adaptive immune system. The alternative complement pathway acts as an amplification loop that enhances other complement pathways (classical, lectin and GZMK) by promoting formation of additional C3 and C5 convertases. CFB is cleaved and activated by CFD to generate Ba and Bb chains; Bb chain constituting the catalytic component of the C3 and C5 convertases. Its function is as follows. Serine protease component of the complement C3 and C5 convertase complexes of the alternative complement pathway. Following cleavage and activation by factor D (CFD), forms the C3 convertase together with complement C3b. As part of the C3 convertase, cleaves and activates C3 into C3a anaphylatoxin and C3b opsonin, the next components of the complement pathways. When an additional complement C3b molecule binds to the C3 convertase, forms the C5 convertase, which cleaves and activates C5 into C5a anaphylatoxin and C5b component of the membrane attack complex. In terms of biological role, involved in proliferation and differentiation of preactivated B-lymphocytes, rapid spreading of peripheral blood monocytes, stimulation of lymphocyte blastogenesis and lysis of erythrocytes. The protein is Complement factor B (CFB) of Pan troglodytes (Chimpanzee).